A 331-amino-acid chain; its full sequence is Glycerol-3-phosphate dehydrogenase [NAD(P)+] (331 aa).

Residues Ser11, Phe12, Arg32, and Lys106 each contribute to the NADPH site. Sn-glycerol 3-phosphate-binding residues include Lys106, Gly134, and Ser136. Ala138 provides a ligand contact to NADPH. Residues Lys189, Asp242, Ser252, Arg253, and Asn254 each contribute to the sn-glycerol 3-phosphate site. Lys189 serves as the catalytic Proton acceptor. Residue Arg253 participates in NADPH binding. Residues Val277 and Glu279 each contribute to the NADPH site.

This sequence belongs to the NAD-dependent glycerol-3-phosphate dehydrogenase family.

Its subcellular location is the cytoplasm. The catalysed reaction is sn-glycerol 3-phosphate + NAD(+) = dihydroxyacetone phosphate + NADH + H(+). It catalyses the reaction sn-glycerol 3-phosphate + NADP(+) = dihydroxyacetone phosphate + NADPH + H(+). It participates in membrane lipid metabolism; glycerophospholipid metabolism. In terms of biological role, catalyzes the reduction of the glycolytic intermediate dihydroxyacetone phosphate (DHAP) to sn-glycerol 3-phosphate (G3P), the key precursor for phospholipid synthesis. The polypeptide is Glycerol-3-phosphate dehydrogenase [NAD(P)+] (Clostridium perfringens (strain SM101 / Type A)).